The following is a 124-amino-acid chain: Large ribosomal subunit protein bL12 (124 aa).

The protein belongs to the bacterial ribosomal protein bL12 family. Homodimer. Part of the ribosomal stalk of the 50S ribosomal subunit. Forms a multimeric L10(L12)X complex, where L10 forms an elongated spine to which 2 to 4 L12 dimers bind in a sequential fashion. Binds GTP-bound translation factors.

Its function is as follows. Forms part of the ribosomal stalk which helps the ribosome interact with GTP-bound translation factors. Is thus essential for accurate translation. This chain is Large ribosomal subunit protein bL12, found in Christiangramia forsetii (strain DSM 17595 / CGMCC 1.15422 / KT0803) (Gramella forsetii).